We begin with the raw amino-acid sequence, 360 residues long: Pyrimidine monooxygenase RutA (360 aa).

Residues 49 to 50 (IK), asparagine 115, glutamate 124, 140 to 141 (RY), and serine 190 each bind FMN.

Belongs to the NtaA/SnaA/DszA monooxygenase family. RutA subfamily.

It carries out the reaction uracil + FMNH2 + NADH + O2 = (Z)-3-ureidoacrylate + FMN + NAD(+) + H2O + H(+). It catalyses the reaction thymine + FMNH2 + NADH + O2 = (Z)-2-methylureidoacrylate + FMN + NAD(+) + H2O + H(+). Functionally, catalyzes the pyrimidine ring opening between N-3 and C-4 by an unusual flavin hydroperoxide-catalyzed mechanism, adding oxygen atoms in the process to yield ureidoacrylate peracid, that immediately reacts with FMN forming ureidoacrylate and FMN-N(5)-oxide. The FMN-N(5)-oxide reacts spontaneously with NADH to produce FMN. Requires the flavin reductase RutF to regenerate FMN in vivo. This is Pyrimidine monooxygenase RutA from Stutzerimonas stutzeri (strain A1501) (Pseudomonas stutzeri).